An 862-amino-acid polypeptide reads, in one-letter code: Squamosa promoter-binding-like protein 1 (862 aa).

Positions 55-98 are disordered; that stretch reads KRRRVSPEDDDGEECINAATTNGDDGQISGQRGRSSEDEMPRQG. A compositionally biased stretch (polar residues) spans 72–87; sequence AATTNGDDGQISGQRG. Residues 104–181 form an SBP-type zinc finger; sequence GPCCQVDGCT…AQHNRRRRKV (78 aa). Residues cysteine 107, cysteine 112, cysteine 129, histidine 132, cysteine 148, cysteine 151, histidine 155, and cysteine 167 each coordinate Zn(2+). The Bipartite nuclear localization signal signature appears at 164-180; that stretch reads KKSCRSRLAQHNRRRRK.

Ubiquitous.

The protein resides in the nucleus. In terms of biological role, trans-acting factor that binds specifically to the consensus nucleotide sequence 5'-TNCGTACAA-3'. In Oryza sativa subsp. japonica (Rice), this protein is Squamosa promoter-binding-like protein 1 (SPL1).